Here is a 540-residue protein sequence, read N- to C-terminus: Eukaryotic translation initiation factor 3 subunit L (540 aa).

The region spanning 307–515 (TFSDILLYIQ…IHIADTKVSH (209 aa)) is the PCI domain.

The protein belongs to the eIF-3 subunit L family. As to quaternary structure, component of the eukaryotic translation initiation factor 3 (eIF-3) complex. The eIF-3 complex interacts with pix.

It is found in the cytoplasm. In terms of biological role, component of the eukaryotic translation initiation factor 3 (eIF-3) complex, which is involved in protein synthesis of a specialized repertoire of mRNAs and, together with other initiation factors, stimulates binding of mRNA and methionyl-tRNAi to the 40S ribosome. The eIF-3 complex specifically targets and initiates translation of a subset of mRNAs involved in cell proliferation. In Drosophila grimshawi (Hawaiian fruit fly), this protein is Eukaryotic translation initiation factor 3 subunit L.